Consider the following 1816-residue polypeptide: Kinesin-like protein KIF1B (1816 aa).

At serine 2 the chain carries N-acetylserine. The Kinesin motor domain maps to 5–354 (SVKVAVRVRP…LRYADRAKQI (350 aa)). ATP is bound at residue 97–104 (GQTGAGKS). The tract at residues 270 to 350 (NINKSLTTLG…TLSTLRYADR (81 aa)) is interaction with KIFBP. A coiled-coil region spans residues 365-386 (NAKLVRELKEEVTRLKDLLRAQ). The interval 431 to 450 (FSTASMGSLTSSPSSCSLSS) is disordered. The segment covering 432 to 450 (STASMGSLTSSPSSCSLSS) has biased composition (low complexity). Residues 470–502 (GEEAIERLKESEKIIAELNETWEEKLRKTEAIR) are a coiled coil. Positions 556–612 (TRVGQADAERRQDIVLSGAHIKEEHCIFRSERSNSGEVIVTLEPCERSETYVNGKRV) constitute an FHA domain. A phosphothreonine mark is found at threonine 647 and threonine 652. Glutamine 663 and glutamate 665 each carry phosphoserine. Coiled-coil stretches lie at residues 668–737 (EKQG…EEEV) and 841–869 (SLEK…AQDE). A phosphoserine mark is found at serine 1054 and serine 1057. Phosphothreonine is present on threonine 1075. Residues asparagine 1141, serine 1416, serine 1454, and serine 1487 each carry the phosphoserine modification. Residues 1550 to 1570 (STTTFESAITPSESSGYDSGD) are disordered. Positions 1554–1566 (FESAITPSESSGY) are enriched in polar residues. Residues serine 1573, serine 1603, serine 1610, and serine 1613 each carry the phosphoserine modification. A disordered region spans residues 1617–1660 (RDPSESSFSSATLTPSSTCPSLVDSRSNSLDQKTPEANSRASSP). Over residues 1621-1634 (ESSFSSATLTPSST) the composition is skewed to low complexity. Positions 1640-1658 (DSRSNSLDQKTPEANSRAS) are enriched in polar residues. In terms of domain architecture, PH spans 1702-1799 (VSKKGYLHFK…WLYAFNPLLA (98 aa)).

Belongs to the TRAFAC class myosin-kinesin ATPase superfamily. Kinesin family. Unc-104 subfamily. Monomer. Interacts with KIFBP; positively regulates KIF1B microtubule motor activity. Interacts (via C-terminus end of the kinesin-motor domain) with CHP1; the interaction occurs in a calcium-dependent manner. In terms of assembly, interacts with MADD (via death domain); links this isoform to Rab3-carrying vesicles in anterograde synaptic vesicle transport. Isoform 3 is abundant in the skeletal muscle. It is also expressed in fetal brain, lung and kidney, and adult heart, placenta, testis, ovary and small intestine. Isoform 2 is abundant in the brain and also expressed in fetal heart, lung, liver and kidney, and adult skeletal muscle, placenta, liver, kidney, heart, spleen, thymus, prostate, testis, ovary, small intestine, colon and pancreas.

The protein resides in the cytoplasm. Its subcellular location is the cytoskeleton. The protein localises to the cytoplasmic vesicle. It localises to the secretory vesicle. It is found in the synaptic vesicle membrane. The protein resides in the mitochondrion. The enzyme catalyses ATP + H2O + a kinesin associated with a microtubule at position (n) = ADP + phosphate a kinesin associated with a microtubule at position (n+1, toward the plus end).. Has a plus-end-directed microtubule motor activity and functions as a motor for transport of vesicles and organelles along microtubules. Functionally, has a plus-end-directed microtubule motor activity and functions as a motor for anterograde synaptic vesicle transport along axonal microtubules from the cell body to the presynapse in neuronal cells. Functions as a downstream effector in a developmental apoptotic pathway that is activated when nerve growth factor (NGF) becomes limiting for neuronal progenitor cells. In terms of biological role, has a plus-end-directed microtubule motor activity and functions as a motor for anterograde transport of mitochondria. This is Kinesin-like protein KIF1B from Homo sapiens (Human).